Reading from the N-terminus, the 62-residue chain is Large ribosomal subunit protein uL30 (62 aa).

Belongs to the universal ribosomal protein uL30 family. Part of the 50S ribosomal subunit.

This is Large ribosomal subunit protein uL30 from Nitrosospira multiformis (strain ATCC 25196 / NCIMB 11849 / C 71).